The primary structure comprises 411 residues: uncharacterized protein (411 aa).

This is an uncharacterized protein from Mycoplasma genitalium (strain ATCC 33530 / DSM 19775 / NCTC 10195 / G37) (Mycoplasmoides genitalium).